The primary structure comprises 344 residues: DNA-directed RNA polymerase subunit alpha (344 aa).

An alpha N-terminal domain (alpha-NTD) region spans residues 1-246; the sequence is MPVEKFLKDF…EFLFPLIDFE (246 aa). The tract at residues 259–344 is alpha C-terminal domain (alpha-CTD); that stretch reads ESSNLLDMSI…VLSKNVKISE (86 aa).

It belongs to the RNA polymerase alpha chain family. As to quaternary structure, homodimer. The RNAP catalytic core consists of 2 alpha, 1 beta, 1 beta' and 1 omega subunit. When a sigma factor is associated with the core the holoenzyme is formed, which can initiate transcription.

The catalysed reaction is RNA(n) + a ribonucleoside 5'-triphosphate = RNA(n+1) + diphosphate. Its function is as follows. DNA-dependent RNA polymerase catalyzes the transcription of DNA into RNA using the four ribonucleoside triphosphates as substrates. This is DNA-directed RNA polymerase subunit alpha from Borrelia garinii subsp. bavariensis (strain ATCC BAA-2496 / DSM 23469 / PBi) (Borreliella bavariensis).